The sequence spans 140 residues: 3-hydroxyacyl-[acyl-carrier-protein] dehydratase FabZ (140 aa).

His48 is a catalytic residue.

It belongs to the thioester dehydratase family. FabZ subfamily.

It is found in the cytoplasm. The catalysed reaction is a (3R)-hydroxyacyl-[ACP] = a (2E)-enoyl-[ACP] + H2O. Involved in unsaturated fatty acids biosynthesis. Catalyzes the dehydration of short chain beta-hydroxyacyl-ACPs and long chain saturated and unsaturated beta-hydroxyacyl-ACPs. This Pelotomaculum thermopropionicum (strain DSM 13744 / JCM 10971 / SI) protein is 3-hydroxyacyl-[acyl-carrier-protein] dehydratase FabZ.